The primary structure comprises 136 residues: NADPH-dependent 7-cyano-7-deazaguanine reductase (136 aa).

C50 (thioimide intermediate) is an active-site residue. The Proton donor role is filled by D57. Residues 72–74 (YEL) and 91–92 (HE) contribute to the substrate site.

Belongs to the GTP cyclohydrolase I family. QueF type 1 subfamily.

The protein localises to the cytoplasm. It carries out the reaction 7-aminomethyl-7-carbaguanine + 2 NADP(+) = 7-cyano-7-deazaguanine + 2 NADPH + 3 H(+). Its pathway is tRNA modification; tRNA-queuosine biosynthesis. Its function is as follows. Catalyzes the NADPH-dependent reduction of 7-cyano-7-deazaguanine (preQ0) to 7-aminomethyl-7-deazaguanine (preQ1). The sequence is that of NADPH-dependent 7-cyano-7-deazaguanine reductase from Prochlorococcus marinus (strain MIT 9215).